The sequence spans 294 residues: Glyceraldehyde-3-phosphate dehydrogenase (294 aa).

NAD(+) is bound by residues aspartate 19, lysine 63, and threonine 105. Residues serine 134–threonine 136, threonine 165, threonine 194–glycine 195, and arginine 217 contribute to the D-glyceraldehyde 3-phosphate site. Cysteine 135 (nucleophile) is an active-site residue.

It belongs to the glyceraldehyde-3-phosphate dehydrogenase family. Homotetramer.

It localises to the cytoplasm. The catalysed reaction is D-glyceraldehyde 3-phosphate + phosphate + NAD(+) = (2R)-3-phospho-glyceroyl phosphate + NADH + H(+). It participates in carbohydrate degradation; glycolysis; pyruvate from D-glyceraldehyde 3-phosphate: step 1/5. Its function is as follows. Catalyzes the oxidative phosphorylation of glyceraldehyde 3-phosphate (G3P) to 1,3-bisphosphoglycerate (BPG) using the cofactor NAD. The first reaction step involves the formation of a hemiacetal intermediate between G3P and a cysteine residue, and this hemiacetal intermediate is then oxidized to a thioester, with concomitant reduction of NAD to NADH. The reduced NADH is then exchanged with the second NAD, and the thioester is attacked by a nucleophilic inorganic phosphate to produce BPG. This chain is Glyceraldehyde-3-phosphate dehydrogenase (gap), found in Serratia odorifera.